Consider the following 160-residue polypeptide: Transcription elongation factor GreA (160 aa).

Positions S49–I77 form a coiled coil.

It belongs to the GreA/GreB family.

Functionally, necessary for efficient RNA polymerase transcription elongation past template-encoded arresting sites. The arresting sites in DNA have the property of trapping a certain fraction of elongating RNA polymerases that pass through, resulting in locked ternary complexes. Cleavage of the nascent transcript by cleavage factors such as GreA or GreB allows the resumption of elongation from the new 3'terminus. GreA releases sequences of 2 to 3 nucleotides. This is Transcription elongation factor GreA from Leuconostoc mesenteroides subsp. mesenteroides (strain ATCC 8293 / DSM 20343 / BCRC 11652 / CCM 1803 / JCM 6124 / NCDO 523 / NBRC 100496 / NCIMB 8023 / NCTC 12954 / NRRL B-1118 / 37Y).